The sequence spans 347 residues: Phosphoribosylformylglycinamidine cyclo-ligase (347 aa).

Belongs to the AIR synthase family.

The protein localises to the cytoplasm. The enzyme catalyses 2-formamido-N(1)-(5-O-phospho-beta-D-ribosyl)acetamidine + ATP = 5-amino-1-(5-phospho-beta-D-ribosyl)imidazole + ADP + phosphate + H(+). Its pathway is purine metabolism; IMP biosynthesis via de novo pathway; 5-amino-1-(5-phospho-D-ribosyl)imidazole from N(2)-formyl-N(1)-(5-phospho-D-ribosyl)glycinamide: step 2/2. This is Phosphoribosylformylglycinamidine cyclo-ligase from Prochlorococcus marinus (strain MIT 9215).